The primary structure comprises 269 residues: Triosephosphate isomerase (269 aa).

8–10 (NWK) serves as a coordination point for substrate. The Electrophile role is filled by H105. E183 acts as the Proton acceptor in catalysis. Residues G189, S227, and 248 to 249 (GG) contribute to the substrate site.

It belongs to the triosephosphate isomerase family. In terms of assembly, homodimer.

The protein resides in the cytoplasm. It catalyses the reaction D-glyceraldehyde 3-phosphate = dihydroxyacetone phosphate. The protein operates within carbohydrate biosynthesis; gluconeogenesis. Its pathway is carbohydrate degradation; glycolysis; D-glyceraldehyde 3-phosphate from glycerone phosphate: step 1/1. In terms of biological role, involved in the gluconeogenesis. Catalyzes stereospecifically the conversion of dihydroxyacetone phosphate (DHAP) to D-glyceraldehyde-3-phosphate (G3P). The protein is Triosephosphate isomerase of Psychrobacter cryohalolentis (strain ATCC BAA-1226 / DSM 17306 / VKM B-2378 / K5).